A 256-amino-acid polypeptide reads, in one-letter code: L-rhamnose 1-dehydrogenase (NAD(P)(+)) (256 aa).

NADP(+)-binding residues include G12, S14, R15, I17, S37, D66, A67, and N93. S146 (proton donor) is an active-site residue. Beta-L-rhamnose is bound by residues S146, S148, Q156, and Y159. NADP(+) contacts are provided by Y159 and K163. Residue Y159 is the Proton acceptor of the active site. Residue K163 is the Lowers pKa of active site Tyr of the active site. Beta-L-rhamnose is bound at residue T191. I192 lines the NADP(+) pocket. N197 serves as a coordination point for beta-L-rhamnose.

It belongs to the short-chain dehydrogenases/reductases (SDR) family.

It carries out the reaction L-rhamnofuranose + NAD(+) = L-rhamnono-1,4-lactone + NADH + H(+). The enzyme catalyses L-rhamnofuranose + NADP(+) = L-rhamnono-1,4-lactone + NADPH + H(+). The protein operates within carbohydrate degradation; L-rhamnose degradation. NAD(P)-dependent dehydrogenase that catalyzes the oxidation of L-rhamnose to L-rhamnono-1,4-lactone. Also shows high activity with L-lyxose and low activity with L-mannose and L-fucose. Can utilize either NAD(+) or NADP(+), with a strong preference for NADP(+). Catalyzes the first step in an alternative pathway for rhamnose utilization that does not involve phosphorylated intermediates. This is L-rhamnose 1-dehydrogenase (NAD(P)(+)) from Azotobacter vinelandii (strain DJ / ATCC BAA-1303).